The following is a 494-amino-acid chain: Caspase-8 (494 aa).

Positions 1 to 242 are excised as a propeptide; the sequence is MAGSNLLIHL…QEIESDNQQS (242 aa). Catalysis depends on residues H345 and C386. A propeptide spanning residues 401–410 is cleaved from the precursor; sequence RIDVTTVSPD.

The protein belongs to the peptidase C14A family. In terms of assembly, heterotetramer that consists of two anti-parallel arranged heterodimers, each one formed by a 15 kDa (caspase-8 subunit p15) and a 10 kDa (caspase-8 subunit p10) subunit. Interacts (via N-terminus) with Diap2; likely to bind Diap2 simultaneously with Fadd to form a trimeric complex. Interacts with Dark (via N-terminus). Polyubiquitinated by Diap2 following activation of the immune deficiency (Imd) pathway. As to expression, constitutively expressed in fat bodies of larvae and adults.

Its subcellular location is the cytoplasm. The enzyme catalyses Strict requirement for Asp at position P1 and has a preferred cleavage sequence of (Leu/Asp/Val)-Glu-Thr-Asp-|-(Gly/Ser/Ala).. In terms of biological role, effector of the programmed cell death (PCD) activators rpr, grim and hid. May play an apoptotic role in the germline as well as soma. Fadd interacts with Dredd to promote cleavage of Dredd and is necessary and sufficient for enhancing Dredd-induced apoptosis. Plays a role in the innate immune response. Required for resistance to Gram-negative bacterial infection. Diap2-mediated ubiquitination of Dredd is critical for processing of imd and rel and the subsequent expression of antimicrobial genes such as DptA. This chain is Caspase-8, found in Drosophila melanogaster (Fruit fly).